A 160-amino-acid chain; its full sequence is Ribosomal RNA large subunit methyltransferase H (160 aa).

S-adenosyl-L-methionine contacts are provided by residues Leu-77, Gly-109, and 128-133; that span reads FSRLTF.

The protein belongs to the RNA methyltransferase RlmH family. In terms of assembly, homodimer.

It localises to the cytoplasm. The enzyme catalyses pseudouridine(1915) in 23S rRNA + S-adenosyl-L-methionine = N(3)-methylpseudouridine(1915) in 23S rRNA + S-adenosyl-L-homocysteine + H(+). Functionally, specifically methylates the pseudouridine at position 1915 (m3Psi1915) in 23S rRNA. This Desulfitobacterium hafniense (strain Y51) protein is Ribosomal RNA large subunit methyltransferase H.